A 123-amino-acid polypeptide reads, in one-letter code: Large ribosomal subunit protein mL52 (123 aa).

A mitochondrion-targeting transit peptide spans 1–23; it reads MAALGTVLFTGVRRLHCSVAAWA. The span at 99–109 shows a compositional bias: basic and acidic residues; it reads QEEQRKQENAL. The tract at residues 99–123 is disordered; it reads QEEQRKQENALKPKGASLKSPLPSQ.

Belongs to the mitochondrion-specific ribosomal protein mL52 family. Component of the mitochondrial large ribosomal subunit (mt-LSU). Mature mammalian 55S mitochondrial ribosomes consist of a small (28S) and a large (39S) subunit. The 28S small subunit contains a 12S ribosomal RNA (12S mt-rRNA) and 30 different proteins. The 39S large subunit contains a 16S rRNA (16S mt-rRNA), a copy of mitochondrial valine transfer RNA (mt-tRNA(Val)), which plays an integral structural role, and 52 different proteins. mL52 connects the central protuberance to the body of the ribosome.

It localises to the mitochondrion. In Homo sapiens (Human), this protein is Large ribosomal subunit protein mL52 (MRPL52).